Reading from the N-terminus, the 450-residue chain is Glucose-6-phosphate isomerase (450 aa).

Thr39 carries the phosphothreonine modification. Glu291 serves as the catalytic Proton donor. Residues His312 and Lys426 contribute to the active site.

Belongs to the GPI family.

The protein resides in the cytoplasm. The enzyme catalyses alpha-D-glucose 6-phosphate = beta-D-fructose 6-phosphate. It functions in the pathway carbohydrate biosynthesis; gluconeogenesis. It participates in carbohydrate degradation; glycolysis; D-glyceraldehyde 3-phosphate and glycerone phosphate from D-glucose: step 2/4. Functionally, catalyzes the reversible isomerization of glucose-6-phosphate to fructose-6-phosphate. In Bacillus cereus (strain G9842), this protein is Glucose-6-phosphate isomerase.